Consider the following 524-residue polypeptide: Inosine-5'-monophosphate dehydrogenase 4 (524 aa).

2 consecutive CBS domains span residues 122-183 and 185-241; these read FINS…VVSE and MTKN…PLAS. At serine 125 the chain carries Phosphoserine. NAD(+)-binding positions include 279 to 281 and 329 to 331; these read DSS and GMG. K(+) is bound by residues glycine 331 and glycine 333. Serine 334 contacts IMP. Cysteine 336 contacts K(+). Catalysis depends on cysteine 336, which acts as the Thioimidate intermediate. IMP-binding positions include 369 to 371, 392 to 393, and 416 to 420; these read DGG, GG, and YRGMG. Catalysis depends on arginine 438, which acts as the Proton acceptor. Residue glutamine 450 coordinates IMP. Glutamate 509, glycine 510, and glycine 511 together coordinate K(+).

This sequence belongs to the IMPDH/GMPR family. As to quaternary structure, homotetramer. Seems to be able to form heterotetramers composed from more than 1 of the 3 IMPDH gene products (IMD2-4). K(+) serves as cofactor.

It is found in the cytoplasm. The catalysed reaction is IMP + NAD(+) + H2O = XMP + NADH + H(+). It participates in purine metabolism; XMP biosynthesis via de novo pathway; XMP from IMP: step 1/1. With respect to regulation, mycophenolic acid (MPA) is a non-competitive inhibitor that prevents formation of the closed enzyme conformation by binding to the same site as the amobile flap. In contrast, mizoribine monophosphate (MZP) is a competitive inhibitor that induces the closed conformation. MPA is a potent inhibitor of mammalian IMPDHs but a poor inhibitor of the bacterial enzymes. MZP is a more potent inhibitor of bacterial IMPDH. Catalyzes the conversion of inosine 5'-phosphate (IMP) to xanthosine 5'-phosphate (XMP), the first committed and rate-limiting step in the de novo synthesis of guanine nucleotides, and therefore plays an important role in the regulation of cell growth. This Saccharomyces cerevisiae (strain ATCC 204508 / S288c) (Baker's yeast) protein is Inosine-5'-monophosphate dehydrogenase 4.